Consider the following 266-residue polypeptide: Amylovoran biosynthesis glycosyltransferase AmsE (266 aa).

Belongs to the glycosyltransferase 2 family.

Its pathway is glycan metabolism; exopolysaccharide biosynthesis. Involved in the biosynthesis of amylovoran which functions as a virulence factor. The polypeptide is Amylovoran biosynthesis glycosyltransferase AmsE (amsE) (Erwinia amylovora (Fire blight bacteria)).